We begin with the raw amino-acid sequence, 75 residues long: Small ribosomal subunit protein bS18 (75 aa).

Belongs to the bacterial ribosomal protein bS18 family. As to quaternary structure, part of the 30S ribosomal subunit. Forms a tight heterodimer with protein bS6.

Functionally, binds as a heterodimer with protein bS6 to the central domain of the 16S rRNA, where it helps stabilize the platform of the 30S subunit. The chain is Small ribosomal subunit protein bS18 from Cereibacter sphaeroides (strain KD131 / KCTC 12085) (Rhodobacter sphaeroides).